A 190-amino-acid chain; its full sequence is NADH-quinone oxidoreductase subunit B (190 aa).

Residues cysteine 39, cysteine 40, cysteine 104, and cysteine 135 each coordinate [4Fe-4S] cluster.

This sequence belongs to the complex I 20 kDa subunit family. As to quaternary structure, NDH-1 is composed of 14 different subunits. Subunits NuoB, C, D, E, F, and G constitute the peripheral sector of the complex. [4Fe-4S] cluster is required as a cofactor.

It is found in the cell inner membrane. The enzyme catalyses a quinone + NADH + 5 H(+)(in) = a quinol + NAD(+) + 4 H(+)(out). Functionally, NDH-1 shuttles electrons from NADH, via FMN and iron-sulfur (Fe-S) centers, to quinones in the respiratory chain. The immediate electron acceptor for the enzyme in this species is believed to be a menaquinone. Couples the redox reaction to proton translocation (for every two electrons transferred, four hydrogen ions are translocated across the cytoplasmic membrane), and thus conserves the redox energy in a proton gradient. The polypeptide is NADH-quinone oxidoreductase subunit B (Chlorobium chlorochromatii (strain CaD3)).